Reading from the N-terminus, the 585-residue chain is Aspartate--tRNA ligase (585 aa).

Glutamate 169 serves as a coordination point for L-aspartate. Positions 193 to 196 (QLFK) are aspartate. Arginine 215 serves as a coordination point for L-aspartate. ATP contacts are provided by residues 215 to 217 (RDE) and glutamine 224. Residue histidine 443 coordinates L-aspartate. Glutamate 478 lines the ATP pocket. Position 485 (arginine 485) interacts with L-aspartate. ATP is bound at residue 530-533 (GLDR).

It belongs to the class-II aminoacyl-tRNA synthetase family. Type 1 subfamily. In terms of assembly, homodimer.

Its subcellular location is the cytoplasm. It carries out the reaction tRNA(Asp) + L-aspartate + ATP = L-aspartyl-tRNA(Asp) + AMP + diphosphate. In terms of biological role, catalyzes the attachment of L-aspartate to tRNA(Asp) in a two-step reaction: L-aspartate is first activated by ATP to form Asp-AMP and then transferred to the acceptor end of tRNA(Asp). In Pseudothermotoga lettingae (strain ATCC BAA-301 / DSM 14385 / NBRC 107922 / TMO) (Thermotoga lettingae), this protein is Aspartate--tRNA ligase.